A 205-amino-acid chain; its full sequence is MGSREEELRAIVRDLGISPYFLGTFDKRFPGFLHKDKLSCAIVNTAARETGGAHWLALAWFPNAKNFYFFDPFGFSDHKLKQIYQFEYEGLLRRSALAGDGCVNLVKSTETVQGPNSAACGLFCCMFLHAFVNWPDRPMTRNPTMDLLTGVPNADMMKPSSLAILRENQNQLYKFLSTHSQYFRTHRPQIERDTSFNKLLELKNQ.

Catalysis depends on residues His-54, Asp-71, and Cys-120.

It belongs to the peptidase C5 family. As to quaternary structure, interacts with protease cofactor pVI-C; this interaction is necessary for protease activation.

Its subcellular location is the virion. It is found in the host nucleus. The enzyme catalyses Cleaves proteins of the adenovirus and its host cell at two consensus sites: -Yaa-Xaa-Gly-Gly-|-Xaa- and -Yaa-Xaa-Gly-Xaa-|-Gly- (in which Yaa is Met, Ile or Leu, and Xaa is any amino acid).. Its activity is regulated as follows. Requires DNA and protease cofactor for maximal activation. Inside nascent virions, becomes partially activated by binding to the viral DNA, allowing it to cleave the cofactor that binds to the protease and fully activates it. Actin, like the viral protease cofactor, seems to act as a cofactor in the cleavage of cytokeratin 18 and of actin itself. Functionally, cleaves viral precursor proteins (pTP, pIIIa, pVI, pVII, pVIII, and pX) inside newly assembled particles giving rise to mature virions. Protease complexed to its cofactor slides along the viral DNA to specifically locate and cleave the viral precursors. Mature virions have a weakened organization compared to the unmature virions, thereby facilitating subsequent uncoating. Without maturation, the particle lacks infectivity and is unable to uncoat. Late in adenovirus infection, in the cytoplasm, may participate in the cytoskeleton destruction. Cleaves host cell cytoskeletal keratins K7 and K18. The polypeptide is Protease (Bos taurus (Bovine)).